Here is a 513-residue protein sequence, read N- to C-terminus: Ribonuclease Y (513 aa).

Residues 6 to 26 traverse the membrane as a helical segment; it reads YIIIAVVIIIICVILGLYVVD. In terms of domain architecture, KH spans 203–288; it reads TVHVVNLPND…EMVEKAKKEV (86 aa). Residues 329–422 enclose the HD domain; it reads VLKHSIEVSH…VQAADAISAA (94 aa).

This sequence belongs to the RNase Y family.

The protein resides in the cell membrane. Functionally, endoribonuclease that initiates mRNA decay. This chain is Ribonuclease Y, found in Clostridium botulinum (strain Loch Maree / Type A3).